Reading from the N-terminus, the 1026-residue chain is Multidrug resistance protein MdtC (1026 aa).

The next 11 membrane-spanning stretches (helical) occupy residues 15–35 (ILIAAAITLCGILGFRLLPVA), 333–353 (EVEETLVISVALVILVVFLFL), 360–380 (LIPAVAVPVSLIGTFAAMYLC), 387–407 (LSLMALTIATGFVVDDAIVVL), 431–451 (VGFTVISMSLSLVAVFLPLLL), 463–483 (FAVTLSVAIGISLVVSLTLTP), 528–548 (LVGVVFLGTVALNIWLYIAIP), 853–873 (LILIVAAIATVYIVLGILYES), 897–917 (LFNAPFSLIALIGIMLLIGIV), 953–973 (PIMMTTLAALFGALPLVLSGG), and 984–1004 (ITIVGGLVMSQLLTLYTTPVV).

This sequence belongs to the resistance-nodulation-cell division (RND) (TC 2.A.6) family. MdtC subfamily. Part of a tripartite efflux system composed of MdtA, MdtB and MdtC. MdtC forms a heteromultimer with MdtB.

It localises to the cell inner membrane. In Salmonella schwarzengrund (strain CVM19633), this protein is Multidrug resistance protein MdtC.